Here is a 245-residue protein sequence, read N- to C-terminus: 8-amino-3,8-dideoxy-manno-octulosonate cytidylyltransferase (245 aa).

It belongs to the KdsB family.

Its subcellular location is the cytoplasm. It carries out the reaction 8-amino-3,8-dideoxy-alpha-D-manno-octulosonate + CTP = CMP-8-amino-3,8-dideoxy-alpha-D-manno-oct-2-ulosonate + diphosphate. It participates in bacterial outer membrane biogenesis; lipopolysaccharide biosynthesis. Activates KDO8N (a required 8-carbon sugar) for incorporation into bacterial lipopolysaccharide in the Shewanella genus. The protein is 8-amino-3,8-dideoxy-manno-octulosonate cytidylyltransferase of Shewanella pealeana (strain ATCC 700345 / ANG-SQ1).